A 122-amino-acid chain; its full sequence is Large ribosomal subunit protein uL14 (122 aa).

The protein belongs to the universal ribosomal protein uL14 family. In terms of assembly, part of the 50S ribosomal subunit. Forms a cluster with proteins L3 and L19. In the 70S ribosome, L14 and L19 interact and together make contacts with the 16S rRNA in bridges B5 and B8.

Its function is as follows. Binds to 23S rRNA. Forms part of two intersubunit bridges in the 70S ribosome. This chain is Large ribosomal subunit protein uL14, found in Stutzerimonas stutzeri (strain A1501) (Pseudomonas stutzeri).